The chain runs to 279 residues: Pantothenate synthetase (279 aa).

An ATP-binding site is contributed by 26 to 33; that stretch reads MGALHSGH. His-33 functions as the Proton donor in the catalytic mechanism. Gln-57 provides a ligand contact to (R)-pantoate. Residue Gln-57 participates in beta-alanine binding. Position 147–150 (147–150) interacts with ATP; the sequence is GQKD. (R)-pantoate is bound at residue Gln-153. Residues Ile-176 and 184–187 contribute to the ATP site; that span reads ESSR.

The protein belongs to the pantothenate synthetase family. As to quaternary structure, homodimer.

The protein localises to the cytoplasm. The enzyme catalyses (R)-pantoate + beta-alanine + ATP = (R)-pantothenate + AMP + diphosphate + H(+). Its pathway is cofactor biosynthesis; (R)-pantothenate biosynthesis; (R)-pantothenate from (R)-pantoate and beta-alanine: step 1/1. Functionally, catalyzes the condensation of pantoate with beta-alanine in an ATP-dependent reaction via a pantoyl-adenylate intermediate. The sequence is that of Pantothenate synthetase from Corynebacterium glutamicum (strain R).